Reading from the N-terminus, the 320-residue chain is MAASVSASCLNRLSSLAVVLVALASAASAQLSSTFYDRSCPNALSTIRSGVNSAVRQEPRVGASLLRLHFHDCFVRGCDASLLLNDTSGEQSQGPNLTLNPRGFVVVNSIKAQVESVCPGIVSCADILAVAARDGVVALGGPSWTVLLGRRDSTASFAGQTSDLPPPTSSLGQLLSAYNKKNLNPTDMVALSGAHTIGQAQCSSFNDHIYNDTNINSAFAASLRANCPRAGSTALAPLDTTTPNAFDNAYYTNLLSQKGLLHSDQELFNSGSTDSTVRSFASSTSAFNSAFATAMVKMGNLSPQTGTQGQIRRSCWKVNS.

A signal peptide spans 1–29 (MAASVSASCLNRLSSLAVVLVALASAASA). At Gln-30 the chain carries Pyrrolidone carboxylic acid. 4 disulfide bridges follow: Cys-40/Cys-118, Cys-73/Cys-78, Cys-124/Cys-315, and Cys-202/Cys-227. Residue His-71 is the Proton acceptor of the active site. Ca(2+) contacts are provided by Asp-72, Val-75, Gly-77, Asp-79, and Ser-81. N-linked (GlcNAc...) asparagine glycosylation is found at Asn-85 and Asn-96. Residue Pro-165 coordinates substrate. His-195 contacts heme b. Position 196 (Thr-196) interacts with Ca(2+). A glycan (N-linked (GlcNAc...) asparagine) is linked at Asn-211. Ca(2+) contacts are provided by Asp-239, Thr-242, and Asp-247.

The protein belongs to the peroxidase family. Classical plant (class III) peroxidase subfamily. Heme b serves as cofactor. It depends on Ca(2+) as a cofactor.

It localises to the secreted. It carries out the reaction 2 a phenolic donor + H2O2 = 2 a phenolic radical donor + 2 H2O. Functionally, removal of H(2)O(2), oxidation of toxic reductants, biosynthesis and degradation of lignin, suberization, auxin catabolism, response to environmental stresses such as wounding, pathogen attack and oxidative stress. These functions might be dependent on each isozyme/isoform in each plant tissue. This Zea mays (Maize) protein is Peroxidase 66 (PER66).